A 373-amino-acid chain; its full sequence is UDP-sugar transporter UST74c (373 aa).

Residues 27–49 (LEEKMGGSADRSSLLDGSGSKEL) form a disordered region. Phosphoserine is present on Ser-50. Helical transmembrane passes span 89–111 (HFPS…LGMG), 131–153 (FPLP…TLSL), 174–196 (ILGL…GALL), 206–225 (MRGY…NGVY), 238–260 (YGLM…YVTG), 275–297 (VFVV…TILC), 302–324 (SALT…GMFI), and 329–351 (VFSW…YTYV).

Belongs to the TPT transporter family. SLC35D subfamily.

It localises to the golgi apparatus membrane. Involved in the import of UDP-sugars from the cytoplasm into the Golgi lumen. In Drosophila melanogaster (Fruit fly), this protein is UDP-sugar transporter UST74c (frc).